A 63-amino-acid chain; its full sequence is Large ribosomal subunit protein uL30 (63 aa).

It belongs to the universal ribosomal protein uL30 family. In terms of assembly, part of the 50S ribosomal subunit.

The chain is Large ribosomal subunit protein uL30 from Coxiella burnetii (strain CbuK_Q154) (Coxiella burnetii (strain Q154)).